A 623-amino-acid polypeptide reads, in one-letter code: Kelch repeat and BTB domain-containing protein 2 (623 aa).

Residues 31–98 (TDIVLIVEGT…AYTGNLAMND (68 aa)) form the BTB domain. Positions 133 to 229 (CVRLLSFADL…IRIDALSEVT (97 aa)) constitute a BACK domain. Serine 300 is subject to Phosphoserine. Kelch repeat units follow at residues 317 to 380 (DIYI…CCEG), 381 to 429 (HIYA…VVHD), 431 to 469 (IYVMTLNLMYCYFPRSDSWVEMAMRQTSRSFASAAAFGD), 470 to 529 (KIFY…RAVV), and 535 to 581 (CVFM…DFRC).

As to quaternary structure, component of the BCR(KBTBD2) E3 ubiquitin ligase complex, at least composed of CUL3, KBTBD2 and RBX1. Interacts (via the BTB domain) with CUL3.

It participates in protein modification; protein ubiquitination. Substrate-specific adapter of a BCR (BTB-CUL3-RBX1) E3 ubiquitin ligase complex that acts as a regulator of the insulin signaling pathway, modulating insulin sensitivity by limiting PIK3R1/p85alpha abundance in adipocytes. Targets PIK3R1, the regulatory subunit of phosphatidylinositol 3-kinase (PI3K), for 'Lys-48'-linked polyubiquitination and proteasome-mediated degradation. The sequence is that of Kelch repeat and BTB domain-containing protein 2 (KBTBD2) from Pongo abelii (Sumatran orangutan).